A 220-amino-acid polypeptide reads, in one-letter code: UPF0502 protein Pnap_3223 (220 aa).

The protein belongs to the UPF0502 family.

This is UPF0502 protein Pnap_3223 from Polaromonas naphthalenivorans (strain CJ2).